We begin with the raw amino-acid sequence, 767 residues long: Phosphoribosylformylglycinamidine synthase subunit PurL (767 aa).

Residue His46 is part of the active site. ATP contacts are provided by Tyr49 and Lys88. Glu90 lines the Mg(2+) pocket. Residues 91-94 (SHNH) and Arg113 contribute to the substrate site. Residue His92 is the Proton acceptor of the active site. A Mg(2+)-binding site is contributed by Asp114. Gln237 contributes to the substrate binding site. Asp265 lines the Mg(2+) pocket. Residue 309–311 (ESQ) participates in substrate binding. Residues Asp498 and Gly535 each contribute to the ATP site. Mg(2+) is bound at residue Asn536. Ser538 provides a ligand contact to substrate.

Belongs to the FGAMS family. As to quaternary structure, monomer. Part of the FGAM synthase complex composed of 1 PurL, 1 PurQ and 2 PurS subunits.

It localises to the cytoplasm. The catalysed reaction is N(2)-formyl-N(1)-(5-phospho-beta-D-ribosyl)glycinamide + L-glutamine + ATP + H2O = 2-formamido-N(1)-(5-O-phospho-beta-D-ribosyl)acetamidine + L-glutamate + ADP + phosphate + H(+). Its pathway is purine metabolism; IMP biosynthesis via de novo pathway; 5-amino-1-(5-phospho-D-ribosyl)imidazole from N(2)-formyl-N(1)-(5-phospho-D-ribosyl)glycinamide: step 1/2. Its function is as follows. Part of the phosphoribosylformylglycinamidine synthase complex involved in the purines biosynthetic pathway. Catalyzes the ATP-dependent conversion of formylglycinamide ribonucleotide (FGAR) and glutamine to yield formylglycinamidine ribonucleotide (FGAM) and glutamate. The FGAM synthase complex is composed of three subunits. PurQ produces an ammonia molecule by converting glutamine to glutamate. PurL transfers the ammonia molecule to FGAR to form FGAM in an ATP-dependent manner. PurS interacts with PurQ and PurL and is thought to assist in the transfer of the ammonia molecule from PurQ to PurL. In Anaeromyxobacter sp. (strain Fw109-5), this protein is Phosphoribosylformylglycinamidine synthase subunit PurL.